Here is an 81-residue protein sequence, read N- to C-terminus: Putative membrane protein insertion efficiency factor 1 (81 aa).

It belongs to the UPF0161 family.

The protein resides in the cell membrane. Functionally, could be involved in insertion of integral membrane proteins into the membrane. This chain is Putative membrane protein insertion efficiency factor 1, found in Bacillus licheniformis (strain ATCC 14580 / DSM 13 / JCM 2505 / CCUG 7422 / NBRC 12200 / NCIMB 9375 / NCTC 10341 / NRRL NRS-1264 / Gibson 46).